We begin with the raw amino-acid sequence, 354 residues long: UDP-N-acetylglucosamine--N-acetylmuramyl-(pentapeptide) pyrophosphoryl-undecaprenol N-acetylglucosamine transferase (354 aa).

Residues 13–15 (SGG), N125, R161, S189, I242, 261–266 (ALTVSE), and Q286 contribute to the UDP-N-acetyl-alpha-D-glucosamine site.

The protein belongs to the glycosyltransferase 28 family. MurG subfamily.

The protein resides in the cell inner membrane. The catalysed reaction is di-trans,octa-cis-undecaprenyl diphospho-N-acetyl-alpha-D-muramoyl-L-alanyl-D-glutamyl-meso-2,6-diaminopimeloyl-D-alanyl-D-alanine + UDP-N-acetyl-alpha-D-glucosamine = di-trans,octa-cis-undecaprenyl diphospho-[N-acetyl-alpha-D-glucosaminyl-(1-&gt;4)]-N-acetyl-alpha-D-muramoyl-L-alanyl-D-glutamyl-meso-2,6-diaminopimeloyl-D-alanyl-D-alanine + UDP + H(+). It functions in the pathway cell wall biogenesis; peptidoglycan biosynthesis. In terms of biological role, cell wall formation. Catalyzes the transfer of a GlcNAc subunit on undecaprenyl-pyrophosphoryl-MurNAc-pentapeptide (lipid intermediate I) to form undecaprenyl-pyrophosphoryl-MurNAc-(pentapeptide)GlcNAc (lipid intermediate II). The polypeptide is UDP-N-acetylglucosamine--N-acetylmuramyl-(pentapeptide) pyrophosphoryl-undecaprenol N-acetylglucosamine transferase (Buchnera aphidicola subsp. Schizaphis graminum (strain Sg)).